The following is a 504-amino-acid chain: Cytochrome P450 4A2 (504 aa).

The propeptide occupies 1–4; the sequence is MGFS. Glu315 is a binding site for heme. Ser434 is subject to Phosphoserine. Cys451 provides a ligand contact to heme.

It belongs to the cytochrome P450 family. It depends on heme as a cofactor.

The protein localises to the endoplasmic reticulum membrane. It localises to the microsome membrane. It carries out the reaction an omega-methyl-long-chain fatty acid + reduced [NADPH--hemoprotein reductase] + O2 = an omega-hydroxy-long-chain fatty acid + oxidized [NADPH--hemoprotein reductase] + H2O + H(+). The enzyme catalyses dodecanoate + reduced [NADPH--hemoprotein reductase] + O2 = (11R)-hydroxydodecanoate + oxidized [NADPH--hemoprotein reductase] + H2O + H(+). It catalyses the reaction dodecanoate + reduced [NADPH--hemoprotein reductase] + O2 = 12-hydroxydodecanoate + oxidized [NADPH--hemoprotein reductase] + H2O + H(+). The catalysed reaction is tetradecanoate + reduced [NADPH--hemoprotein reductase] + O2 = 14-hydroxytetradecanoate + oxidized [NADPH--hemoprotein reductase] + H2O + H(+). It carries out the reaction hexadecanoate + reduced [NADPH--hemoprotein reductase] + O2 = 16-hydroxyhexadecanoate + oxidized [NADPH--hemoprotein reductase] + H2O + H(+). The protein operates within lipid metabolism; fatty acid metabolism. A cytochrome P450 monooxygenase that catalyzes omega and omega-1 hydroxylation of saturated fatty acids. Exhibits preferential omega versus omega-1 regioselectivity and (R) versus (S) stereoselectivity for hydroxylation of lauric and myristic acids. Has low activity toward palmitic acid. Mechanistically, uses molecular oxygen inserting one oxygen atom into a substrate, and reducing the second into a water molecule, with two electrons provided by NADPH via cytochrome P450 reductase (CPR; NADPH-ferrihemoprotein reductase). The sequence is that of Cytochrome P450 4A2 from Rattus norvegicus (Rat).